Consider the following 225-residue polypeptide: Small ribosomal subunit protein uS3 (225 aa).

The KH type-2 domain maps to 38 to 106; sequence IRKFVQNRFN…PVNLNIIEVK (69 aa).

The protein belongs to the universal ribosomal protein uS3 family. Part of the 30S ribosomal subunit. Forms a tight complex with proteins S10 and S14.

Its function is as follows. Binds the lower part of the 30S subunit head. Binds mRNA in the 70S ribosome, positioning it for translation. The protein is Small ribosomal subunit protein uS3 of Leptospira interrogans serogroup Icterohaemorrhagiae serovar copenhageni (strain Fiocruz L1-130).